Here is a 338-residue protein sequence, read N- to C-terminus: Nodulation protein D (338 aa).

In terms of domain architecture, HTH lysR-type spans Leu-6 to Thr-63. A DNA-binding region (H-T-H motif) is located at residues Leu-23–Ala-42.

This sequence belongs to the LysR transcriptional regulatory family.

In terms of biological role, nodD regulates the expression of the nodABCFE genes which encode other nodulation proteins. NodD is also a negative regulator of its own expression. Binds flavonoids as inducers. The chain is Nodulation protein D (nodD) from Bradyrhizobium sp. (strain ANU 289).